We begin with the raw amino-acid sequence, 453 residues long: Probable tRNA methyltransferase 9B (453 aa).

Ser-214 carries the post-translational modification Phosphoserine.

Belongs to the methyltransferase superfamily.

May modify wobble uridines in specific arginine and glutamic acid tRNAs. Acts as a tumor suppressor by promoting the expression of LIN9. This chain is Probable tRNA methyltransferase 9B (TRMT9B), found in Bos taurus (Bovine).